Consider the following 250-residue polypeptide: Cytochrome c oxidase subunit 2 (250 aa).

Residues M1–T27 lie on the Mitochondrial intermembrane side of the membrane. A helical transmembrane segment spans residues P28–N61. The Mitochondrial matrix segment spans residues Y62–G77. The helical transmembrane segment at T78–D107 threads the bilayer. Topologically, residues E108 to Q250 are mitochondrial intermembrane. Residues H185, C220, E222, C224, H228, and M231 each contribute to the Cu cation site. E222 provides a ligand contact to Mg(2+).

This sequence belongs to the cytochrome c oxidase subunit 2 family. As to quaternary structure, component of the cytochrome c oxidase (complex IV, CIV), a multisubunit enzyme composed of 11 subunits. The complex is composed of a catalytic core of 3 subunits Cox1, Cox2 and Cox3, encoded in the mitochondrial DNA, and 8 supernumerary subunits Cox4, Cox5a/Cox5, Cox6, Cox7, Cox8, Cox7a/Cox9, Cox6b/Cox12 and Cox6a/Cox13, which are encoded in the nuclear genome. The complex exists as a monomer or a dimer and forms respiratory supercomplexes (SCs) in the inner mitochondrial membrane with NADH-ubiquinone oxidoreductase (complex I, CI) and ubiquinol-cytochrome c oxidoreductase (cytochrome b-c1 complex, complex III, CIII), resulting in various different assemblies (supercomplexes I(1)IV(1), I(1)III(3)IV(2), III(2)IV(1) and III(2)IV(2) as well as larger supercomplexes of compositions like I(1)III(2)IV(5-6)). Cu cation is required as a cofactor.

The protein localises to the mitochondrion inner membrane. The enzyme catalyses 4 Fe(II)-[cytochrome c] + O2 + 8 H(+)(in) = 4 Fe(III)-[cytochrome c] + 2 H2O + 4 H(+)(out). Component of the cytochrome c oxidase, the last enzyme in the mitochondrial electron transport chain which drives oxidative phosphorylation. The respiratory chain contains 3 multisubunit complexes succinate dehydrogenase (complex II, CII), ubiquinol-cytochrome c oxidoreductase (cytochrome b-c1 complex, complex III, CIII) and cytochrome c oxidase (complex IV, CIV), that cooperate to transfer electrons derived from NADH and succinate to molecular oxygen, creating an electrochemical gradient over the inner membrane that drives transmembrane transport and the ATP synthase. Cytochrome c oxidase is the component of the respiratory chain that catalyzes the reduction of oxygen to water. Electrons originating from reduced cytochrome c in the intermembrane space (IMS) are transferred via the dinuclear copper A center (CU(A)) of Cox2 and heme A of Cox1 to the active site in Cox1, a binuclear center (BNC) formed by heme A3 and copper B (CU(B)). The BNC reduces molecular oxygen to 2 water molecules using 4 electrons from cytochrome c in the IMS and 4 protons from the mitochondrial matrix. The chain is Cytochrome c oxidase subunit 2 (cox-2) from Neurospora crassa (strain ATCC 24698 / 74-OR23-1A / CBS 708.71 / DSM 1257 / FGSC 987).